Reading from the N-terminus, the 183-residue chain is Ferredoxin-2, mitochondrial (183 aa).

The transit peptide at 1–52 (MAASMARGGVSARVLLQAARGTWWNRPGGTSGSGEGVALGTTRKFQATGSRP) directs the protein to the mitochondrion. The interval 45–65 (FQATGSRPAGEEDAGGPERPG) is disordered. The region spanning 68-170 (VNVVFVDRSG…GAEFTLPKIT (103 aa)) is the 2Fe-2S ferredoxin-type domain. The [2Fe-2S] cluster site is built by Cys105, Cys111, Cys114, and Cys151.

It belongs to the adrenodoxin/putidaredoxin family. Component of the mitochondrial core iron-sulfur cluster (ISC) complex composed of NFS1, LYRM4, NDUFAB1, ISCU, FXN, and FDX2; this complex is a heterohexamer containing two copies of each monomer. Form a heterodimer complex with NFS1. Interacts (in both their reduced and oxidized states) with the cysteine desulfurase complex; this interaction stimulates cysteine desulfurase activity, and serves as a reductant for Fe-S cluster assembly. [2Fe-2S] cluster serves as cofactor. Widely expressed, with highest levels in testis, kidney and brain (at protein level). Expressed in muscle (at protein level). Expressed in fibroblasts (at protein level).

Its subcellular location is the mitochondrion. The protein localises to the mitochondrion matrix. Functionally, electron donor, of the core iron-sulfur cluster (ISC) assembly complex, that acts to reduce the persulfide into sulfide during [2Fe-2S] clusters assembly on the scaffolding protein ISCU. The core iron-sulfur cluster (ISC) assembly complex is involved in the de novo synthesis of a [2Fe-2S] cluster, the first step of the mitochondrial iron-sulfur protein biogenesis. This process is initiated by the cysteine desulfurase complex (NFS1:LYRM4:NDUFAB1) that produces persulfide which is delivered on the scaffold protein ISCU in a FXN-dependent manner. Then this complex is stabilized by FDX2 which provides reducing equivalents to accomplish the [2Fe-2S] cluster assembly. Finally, the [2Fe-2S] cluster is transferred from ISCU to chaperone proteins, including HSCB, HSPA9 and GLRX5. Essential for coenzyme Q biosynthesis: together with FDXR, transfers the electrons required for the hydroxylation reaction performed by COQ6. The chain is Ferredoxin-2, mitochondrial from Homo sapiens (Human).